The primary structure comprises 498 residues: MSSKQEKTKARLPRGFIDRTSAQLYATETMIAQIREVYELYGFEALETPIFEYTDVLGKFLPDEDRPNAGVFSLQDEDEQWMSLRYDLTAPLARYFAENFEILPKPYRSYRLGFVFRNEKPGPGRFRQFMQFDADIVGTPTVAADAEICMMAADSLEKLGFQHHDYVIRLNNRKILEAVLEQIGLVGREKAEKRLTVLRAIDKLDKFGLEGVRLLLGKGRLDESGDFTKGAQLKDQEIDSVLALLTGEAETAEETLDALRHVVGHHIQGLEGVRELEEMQAIFAANGYQNRIKIDPSVVRGLEYYTGPVFEATLLFDVLNDDGQKVVFGSIGGGGRYDGLVARFRGENVPATGFSIGISRLITALQNLSKLPVKKTPGPVVVLMMDREPEAVAQYQKMVMQLRKAGIRAELYLGASGIKAQMKYADRRQAPCVVIQGSQERQDRKIQIKDLIEGTRLSREIKDNQTWRESRPAQITVDEERLVQAVQDILISQNAQKF.

The protein belongs to the class-II aminoacyl-tRNA synthetase family. Homodimer.

It is found in the cytoplasm. The enzyme catalyses tRNA(His) + L-histidine + ATP = L-histidyl-tRNA(His) + AMP + diphosphate + H(+). The polypeptide is Histidine--tRNA ligase (Bartonella quintana (strain Toulouse) (Rochalimaea quintana)).